The following is a 322-amino-acid chain: Tetraacyldisaccharide 4'-kinase (322 aa).

54–61 is a binding site for ATP; it reads SVGGTGKT.

The protein belongs to the LpxK family.

The enzyme catalyses a lipid A disaccharide + ATP = a lipid IVA + ADP + H(+). Its pathway is glycolipid biosynthesis; lipid IV(A) biosynthesis; lipid IV(A) from (3R)-3-hydroxytetradecanoyl-[acyl-carrier-protein] and UDP-N-acetyl-alpha-D-glucosamine: step 6/6. Its function is as follows. Transfers the gamma-phosphate of ATP to the 4'-position of a tetraacyldisaccharide 1-phosphate intermediate (termed DS-1-P) to form tetraacyldisaccharide 1,4'-bis-phosphate (lipid IVA). The protein is Tetraacyldisaccharide 4'-kinase of Francisella tularensis subsp. holarctica (strain FTNF002-00 / FTA).